The chain runs to 432 residues: Tol-Pal system protein TolB (432 aa).

Residues 1–29 (MMRNVWKSGLRRSAWIGLLMVLCVGVARA) form the signal peptide.

The protein belongs to the TolB family. The Tol-Pal system is composed of five core proteins: the inner membrane proteins TolA, TolQ and TolR, the periplasmic protein TolB and the outer membrane protein Pal. They form a network linking the inner and outer membranes and the peptidoglycan layer.

It localises to the periplasm. In terms of biological role, part of the Tol-Pal system, which plays a role in outer membrane invagination during cell division and is important for maintaining outer membrane integrity. The protein is Tol-Pal system protein TolB of Ralstonia nicotianae (strain ATCC BAA-1114 / GMI1000) (Ralstonia solanacearum).